The primary structure comprises 322 residues: Probable cAMP-dependent protein kinase catalytic subunit (322 aa).

Positions 7-261 constitute a Protein kinase domain; it reads FEFVKVVGVG…ICEIMGHPFF (255 aa). ATP is bound by residues 13–21 and Lys37; that span reads VGVGAFGKV. Asp132 serves as the catalytic Proton acceptor. The AGC-kinase C-terminal domain maps to 262–322; sequence KGIDWHEVES…KHLYKVSKGL (61 aa).

The protein belongs to the protein kinase superfamily. AGC Ser/Thr protein kinase family. cAMP subfamily.

It carries out the reaction L-seryl-[protein] + ATP = O-phospho-L-seryl-[protein] + ADP + H(+). It catalyses the reaction L-threonyl-[protein] + ATP = O-phospho-L-threonyl-[protein] + ADP + H(+). The chain is Probable cAMP-dependent protein kinase catalytic subunit from Encephalitozoon cuniculi (strain GB-M1) (Microsporidian parasite).